We begin with the raw amino-acid sequence, 356 residues long: Magnesium-chelatase subunit ChlI (356 aa).

47–54 (GDRGTGKS) contacts ATP.

Belongs to the Mg-chelatase subunits D/I family.

It localises to the plastid. Its subcellular location is the chloroplast. It catalyses the reaction protoporphyrin IX + Mg(2+) + ATP + H2O = Mg-protoporphyrin IX + ADP + phosphate + 3 H(+). Its pathway is porphyrin-containing compound metabolism; chlorophyll biosynthesis. In terms of biological role, involved in chlorophyll biosynthesis; introduces a magnesium ion into protoporphyrin IX to yield Mg-protoporphyrin IX. The protein is Magnesium-chelatase subunit ChlI (chlI) of Porphyra purpurea (Red seaweed).